The chain runs to 159 residues: Succinate dehydrogenase [ubiquinone] cytochrome b small subunit, mitochondrial (159 aa).

The transit peptide at 1–56 (MAVLWRLSAVCGAQGGRALLLRTPVVRPAHISAFLQDRPIPEWCGVQHIHLSPGHH) directs the protein to the mitochondrion. At 57 to 63 (SGSKAAS) the chain is on the mitochondrial matrix side. A helical transmembrane segment spans residues 64-85 (LHWTSERVVSVLLLGLLPAAYL). Residues 86 to 90 (NPCSA) are Mitochondrial intermembrane-facing. The helical transmembrane segment at 91 to 111 (MDYSLAATLTLHGHWGLGQVV) threads the bilayer. Heme b is bound at residue histidine 102. Over 112–120 (TDYVHGDAS) the chain is Mitochondrial matrix. Tyrosine 114 is a binding site for a ubiquinone. The helical transmembrane segment at 121–142 (QKAAKAGLLALSALTFAGLCYF) threads the bilayer. Residues 143–159 (NYHDVGICKAVAMLWKL) lie on the Mitochondrial intermembrane side of the membrane.

It belongs to the CybS family. In terms of assembly, component of complex II composed of four subunits: the flavoprotein (FP) SDHA, iron-sulfur protein (IP) SDHB, and a cytochrome b560 composed of SDHC and SDHD.

It is found in the mitochondrion inner membrane. It functions in the pathway carbohydrate metabolism; tricarboxylic acid cycle. Functionally, membrane-anchoring subunit of succinate dehydrogenase (SDH) that is involved in complex II of the mitochondrial electron transport chain and is responsible for transferring electrons from succinate to ubiquinone (coenzyme Q). SDH also oxidizes malate to the non-canonical enol form of oxaloacetate, enol-oxaloacetate. Enol-oxaloacetate, which is a potent inhibitor of the succinate dehydrogenase activity, is further isomerized into keto-oxaloacetate. In Pongo abelii (Sumatran orangutan), this protein is Succinate dehydrogenase [ubiquinone] cytochrome b small subunit, mitochondrial (SDHD).